We begin with the raw amino-acid sequence, 211 residues long: MKKAILATKVGMTQIFNEDGVLTPVTVLQAGPCVVTQVKTVENDGYDAVQVGFADIREKLVNKPVKGHFDKAEVPYKRFLREFKFENASEYSVKDEIKADIFAAGDKVDATAISKGKGFQGAIKRLGQSRGPMAHGSKFHRHQGSNGSATTPGRVFKGKGMPGHMGSKRITIQNLEVVRVDVENNVILVKGAVPGPKKSLVTLKETVKAAK.

Residues 130–154 (RGPMAHGSKFHRHQGSNGSATTPGR) form a disordered region.

This sequence belongs to the universal ribosomal protein uL3 family. In terms of assembly, part of the 50S ribosomal subunit. Forms a cluster with proteins L14 and L19.

One of the primary rRNA binding proteins, it binds directly near the 3'-end of the 23S rRNA, where it nucleates assembly of the 50S subunit. The chain is Large ribosomal subunit protein uL3 from Lachnospira eligens (strain ATCC 27750 / DSM 3376 / VPI C15-48 / C15-B4) (Eubacterium eligens).